We begin with the raw amino-acid sequence, 207 residues long: Ribosomal RNA small subunit methyltransferase G (207 aa).

S-adenosyl-L-methionine-binding positions include Gly-74, Phe-79, 124-125 (VE), and Arg-138.

Belongs to the methyltransferase superfamily. RNA methyltransferase RsmG family.

The protein resides in the cytoplasm. It catalyses the reaction guanosine(527) in 16S rRNA + S-adenosyl-L-methionine = N(7)-methylguanosine(527) in 16S rRNA + S-adenosyl-L-homocysteine. Specifically methylates the N7 position of guanine in position 527 of 16S rRNA. This Hyphomonas neptunium (strain ATCC 15444) protein is Ribosomal RNA small subunit methyltransferase G.